A 506-amino-acid polypeptide reads, in one-letter code: MDTILALTGITKRFPGVVALRGIDLRVARGEIHALLGENGAGKSTLMKILCGIYPPDEGTIAIDGEPRRFANHHDAIAAGVGIVFQEFSLIPDLNAVDNLFLGREWRGRLGLRDRARMRRAAADIFARLGMAVDLSAPVRELSVAQQQFVEIGKALSLDARVLILDEPTATLTPAEAARLFGVMRELKRQGVAMIFISHHLDEIFEVCDRITVLRDGQYVGTTQRARTDVGALVEMMVGRRIEHSFPPKPPLARDAAAVLEVDALQVRENGPVNRFALREGEILGFAGLVGSGRTSSALALIGAKPARVRRMRLRGRAVRLSGPADALAAGIGLLPESRKTQGLITEFSIRHNVAINNLGKHRRLRWFVDAAAEARATRELMKRLGVKAPTPDTRVDTLSGGNQQKVVIARWLNHHTRILIFDEPTRGIDIGAKAEIYQLMRELTARGYSIVLISSELPEIVGMCDRVAVFRQGRIEAVLDGDAIDANTVMTYATSDARGANHEHA.

ABC transporter domains follow at residues 5-241 (LALT…VGRR) and 254-498 (RDAA…TSDA). 37-44 (GENGAGKS) provides a ligand contact to ATP.

Belongs to the ABC transporter superfamily. Ribose importer (TC 3.A.1.2.1) family. As to quaternary structure, the complex is composed of an ATP-binding protein (RbsA), two transmembrane proteins (RbsC) and a solute-binding protein (RbsB).

The protein localises to the cell inner membrane. It catalyses the reaction D-ribose(out) + ATP + H2O = D-ribose(in) + ADP + phosphate + H(+). In terms of biological role, part of the ABC transporter complex RbsABC involved in ribose import. Responsible for energy coupling to the transport system. This Burkholderia thailandensis (strain ATCC 700388 / DSM 13276 / CCUG 48851 / CIP 106301 / E264) protein is Ribose import ATP-binding protein RbsA 1.